An 860-amino-acid chain; its full sequence is Pentatricopeptide repeat-containing protein At1g18900 (860 aa).

PPR repeat units lie at residues 363–397 (DGHT…GCQP), 398–432 (NTVT…GCKP), 433–467 (DRVT…GLSP), 468–502 (DTFT…GCTP), 503–537 (NLVT…GFEP), 538–572 (DKVT…NWIP), 573–607 (DEPV…GLRP), and 608–642 (NVPT…GLRP). One can recognise a Smr domain in the interval 760 to 843 (INLHVMSEGT…NSGCFVGSGE (84 aa)).

It belongs to the PPR family. P subfamily.

This Arabidopsis thaliana (Mouse-ear cress) protein is Pentatricopeptide repeat-containing protein At1g18900.